A 357-amino-acid chain; its full sequence is Mitogen-activated protein kinase Hog1 (357 aa).

Positions 20-299 constitute a Protein kinase domain; the sequence is YTDLQPVGMG…AGEALADPYL (280 aa). Residues 26 to 34 and lysine 49 contribute to the ATP site; that span reads VGMGAFGLV. Aspartate 141 serves as the catalytic Proton acceptor. The residue at position 171 (threonine 171) is a Phosphothreonine. The short motif at 171–173 is the TXY element; the sequence is TGY. The residue at position 173 (tyrosine 173) is a Phosphotyrosine.

This sequence belongs to the protein kinase superfamily. Ser/Thr protein kinase family. MAP kinase subfamily. HOG1 sub-subfamily. The cofactor is Mg(2+). Post-translationally, dually phosphorylated on Thr-171 and Tyr-173, which activates the enzyme.

It is found in the cytoplasm. Its subcellular location is the nucleus. The catalysed reaction is L-seryl-[protein] + ATP = O-phospho-L-seryl-[protein] + ADP + H(+). The enzyme catalyses L-threonyl-[protein] + ATP = O-phospho-L-threonyl-[protein] + ADP + H(+). With respect to regulation, activated by tyrosine and threonine phosphorylation. Its function is as follows. Proline-directed serine/threonine-protein kinase involved in a signal transduction pathway that is activated by changes in the osmolarity of the extracellular environment. Controls osmotic regulation of transcription of target genes. The protein is Mitogen-activated protein kinase Hog1 (Hog1) of Zymoseptoria tritici (strain CBS 115943 / IPO323) (Speckled leaf blotch fungus).